An 89-amino-acid polypeptide reads, in one-letter code: Small ribosomal subunit protein uS15 (89 aa).

Belongs to the universal ribosomal protein uS15 family. In terms of assembly, part of the 30S ribosomal subunit. Forms a bridge to the 50S subunit in the 70S ribosome, contacting the 23S rRNA.

Its function is as follows. One of the primary rRNA binding proteins, it binds directly to 16S rRNA where it helps nucleate assembly of the platform of the 30S subunit by binding and bridging several RNA helices of the 16S rRNA. Functionally, forms an intersubunit bridge (bridge B4) with the 23S rRNA of the 50S subunit in the ribosome. The protein is Small ribosomal subunit protein uS15 of Treponema denticola (strain ATCC 35405 / DSM 14222 / CIP 103919 / JCM 8153 / KCTC 15104).